The sequence spans 111 residues: uncharacterized protein (111 aa).

A helical transmembrane segment spans residues 48–70 (LFLVPFPASFTRWLTFLFHLVIY).

The protein resides in the membrane. This is an uncharacterized protein from Saccharomyces cerevisiae (strain ATCC 204508 / S288c) (Baker's yeast).